Reading from the N-terminus, the 389-residue chain is Mitochondrial tRNA-specific 2-thiouridylase 1 (389 aa).

ATP is bound by residues 8 to 15 (GVSGGVDS) and M34. Residues 94-96 (NPD) form an interaction with target base in tRNA region. Catalysis depends on C99, which acts as the Nucleophile. The cysteines at positions 99 and 205 are disulfide-linked. G124 serves as a coordination point for ATP. The interaction with tRNA stretch occupies residues 154–156 (KDQ). Catalysis depends on C205, which acts as the Cysteine persulfide intermediate. The interaction with tRNA stretch occupies residues 317-318 (QH).

This sequence belongs to the MnmA/TRMU family.

It is found in the mitochondrion. It catalyses the reaction 5-taurinomethyluridine(34) in tRNA + S-sulfanyl-L-cysteinyl-[protein] + AH2 + ATP = 5-taurinomethyl-2-thiouridine(34) in tRNA + L-cysteinyl-[protein] + A + AMP + diphosphate + H(+). Catalyzes the 2-thiolation of uridine at the wobble position (U34) of mitochondrial tRNA(Lys), tRNA(Glu) and tRNA(Gln). Required for the formation of 5-taurinomethyl-2-thiouridine (tm5s2U) of mitochondrial tRNA(Lys), tRNA(Glu), and tRNA(Gln) at the wobble position. ATP is required to activate the C2 atom of the wobble base. This Drosophila melanogaster (Fruit fly) protein is Mitochondrial tRNA-specific 2-thiouridylase 1.